A 112-amino-acid polypeptide reads, in one-letter code: Transmembrane protein 14 homolog (112 aa).

A helical transmembrane segment spans residues 3–23; sequence VDWFGYVYAATVAAGGIMGYA.

It belongs to the TMEM14 family.

Its subcellular location is the membrane. The sequence is that of Transmembrane protein 14 homolog from Drosophila melanogaster (Fruit fly).